A 113-amino-acid polypeptide reads, in one-letter code: Putative pterin-4-alpha-carbinolamine dehydratase (113 aa).

The protein belongs to the pterin-4-alpha-carbinolamine dehydratase family.

It carries out the reaction (4aS,6R)-4a-hydroxy-L-erythro-5,6,7,8-tetrahydrobiopterin = (6R)-L-erythro-6,7-dihydrobiopterin + H2O. This is Putative pterin-4-alpha-carbinolamine dehydratase from Idiomarina loihiensis (strain ATCC BAA-735 / DSM 15497 / L2-TR).